Reading from the N-terminus, the 359-residue chain is 3-dehydroquinate synthase (359 aa).

NAD(+) contacts are provided by residues 70 to 75 (DAEGGK), 104 to 108 (GAATD), 128 to 129 (TT), lysine 141, and lysine 150. Zn(2+)-binding residues include glutamate 183, histidine 246, and histidine 262.

This sequence belongs to the sugar phosphate cyclases superfamily. Dehydroquinate synthase family. The cofactor is Co(2+). Zn(2+) is required as a cofactor. NAD(+) serves as cofactor.

It is found in the cytoplasm. The enzyme catalyses 7-phospho-2-dehydro-3-deoxy-D-arabino-heptonate = 3-dehydroquinate + phosphate. It functions in the pathway metabolic intermediate biosynthesis; chorismate biosynthesis; chorismate from D-erythrose 4-phosphate and phosphoenolpyruvate: step 2/7. Functionally, catalyzes the conversion of 3-deoxy-D-arabino-heptulosonate 7-phosphate (DAHP) to dehydroquinate (DHQ). In Mycolicibacterium vanbaalenii (strain DSM 7251 / JCM 13017 / BCRC 16820 / KCTC 9966 / NRRL B-24157 / PYR-1) (Mycobacterium vanbaalenii), this protein is 3-dehydroquinate synthase.